We begin with the raw amino-acid sequence, 74 residues long: Large ribosomal subunit protein bL31 (74 aa).

This sequence belongs to the bacterial ribosomal protein bL31 family. Type A subfamily. Part of the 50S ribosomal subunit.

In terms of biological role, binds the 23S rRNA. This is Large ribosomal subunit protein bL31 from Synechococcus sp. (strain JA-2-3B'a(2-13)) (Cyanobacteria bacterium Yellowstone B-Prime).